Consider the following 141-residue polypeptide: Hemoglobin subunit alpha-3 (141 aa).

The 141-residue stretch at 1–141 folds into the Globin domain; the sequence is VLSPADKTNV…VSTVLTSKYR (141 aa). H58 contacts O2. H87 lines the heme b pocket.

Belongs to the globin family. As to quaternary structure, heterotetramer of two alpha chains and two beta chains. In terms of tissue distribution, red blood cells.

In terms of biological role, involved in oxygen transport from the lung to the various peripheral tissues. The polypeptide is Hemoglobin subunit alpha-3 (Gorilla gorilla gorilla (Western lowland gorilla)).